Here is a 370-residue protein sequence, read N- to C-terminus: Cobalt-precorrin-5B C(1)-methyltransferase (370 aa).

Belongs to the CbiD family.

The catalysed reaction is Co-precorrin-5B + S-adenosyl-L-methionine = Co-precorrin-6A + S-adenosyl-L-homocysteine. It functions in the pathway cofactor biosynthesis; adenosylcobalamin biosynthesis; cob(II)yrinate a,c-diamide from sirohydrochlorin (anaerobic route): step 6/10. In terms of biological role, catalyzes the methylation of C-1 in cobalt-precorrin-5B to form cobalt-precorrin-6A. The sequence is that of Cobalt-precorrin-5B C(1)-methyltransferase from Pseudomonas savastanoi pv. phaseolicola (strain 1448A / Race 6) (Pseudomonas syringae pv. phaseolicola (strain 1448A / Race 6)).